The sequence spans 158 residues: Disease resistance response protein DRRG49-C (158 aa).

It belongs to the BetVI family.

The protein is Disease resistance response protein DRRG49-C of Pisum sativum (Garden pea).